A 119-amino-acid polypeptide reads, in one-letter code: Putative F420H(2)-dependent quinone reductase Rv3178 (119 aa).

Coenzyme F420-(gamma-Glu)n contacts are provided by residues 21-23 (RKS), 27-32 (FVAPLL), 43-46 (VASA), and 54-58 (QWYRN).

This sequence belongs to the F420H(2)-dependent quinone reductase family.

Its subcellular location is the cell membrane. The enzyme catalyses oxidized coenzyme F420-(gamma-L-Glu)(n) + a quinol + H(+) = reduced coenzyme F420-(gamma-L-Glu)(n) + a quinone. Functionally, involved in a F420-dependent anti-oxidant mechanism that protects M.tuberculosis against oxidative stress and bactericidal agents. Catalyzes the F420H(2)-dependent two-electron reduction of quinones to dihydroquinones, thereby preventing the formation of cytotoxic semiquinones obtained by the one-electron reduction pathway. Since menaquinone is the sole quinone electron carrier in the respiratory chain in M.tuberculosis, the physiological electron acceptor for Fqr-mediated F420H(2) oxidation is therefore likely to be the endogenous menaquinone found in the membrane fraction of M.tuberculosis. This chain is Putative F420H(2)-dependent quinone reductase Rv3178, found in Mycobacterium tuberculosis (strain ATCC 25618 / H37Rv).